Reading from the N-terminus, the 424-residue chain is Serine--tRNA ligase (424 aa).

An L-serine-binding site is contributed by 231-233 (TAE). 262 to 264 (RAE) contacts ATP. Position 285 (E285) interacts with L-serine. 349-352 (EISS) provides a ligand contact to ATP. S385 provides a ligand contact to L-serine.

This sequence belongs to the class-II aminoacyl-tRNA synthetase family. Type-1 seryl-tRNA synthetase subfamily. As to quaternary structure, homodimer. The tRNA molecule binds across the dimer.

The protein resides in the cytoplasm. It catalyses the reaction tRNA(Ser) + L-serine + ATP = L-seryl-tRNA(Ser) + AMP + diphosphate + H(+). The catalysed reaction is tRNA(Sec) + L-serine + ATP = L-seryl-tRNA(Sec) + AMP + diphosphate + H(+). It participates in aminoacyl-tRNA biosynthesis; selenocysteinyl-tRNA(Sec) biosynthesis; L-seryl-tRNA(Sec) from L-serine and tRNA(Sec): step 1/1. Its function is as follows. Catalyzes the attachment of serine to tRNA(Ser). Is also able to aminoacylate tRNA(Sec) with serine, to form the misacylated tRNA L-seryl-tRNA(Sec), which will be further converted into selenocysteinyl-tRNA(Sec). The chain is Serine--tRNA ligase from Geobacillus kaustophilus (strain HTA426).